Consider the following 117-residue polypeptide: MTALALFDLLKPNYALATQVEFTDPEIVAEYITYPSPNGHGEVRGYLVKPAKMSGKTPAVVVVHENRGLNPYIEDVARRVAKAGYIALAPDGLSSVGGYPGNDDKGRELQQQVDPTN.

The tract at residues 91–117 is disordered; sequence DGLSSVGGYPGNDDKGRELQQQVDPTN.

This chain is Putative hydrolase fragment YghX (yghX), found in Escherichia coli (strain K12).